Consider the following 316-residue polypeptide: Probable 5-dehydro-4-deoxyglucarate dehydratase 1 (316 aa).

This sequence belongs to the DapA family.

It carries out the reaction 5-dehydro-4-deoxy-D-glucarate + H(+) = 2,5-dioxopentanoate + CO2 + H2O. It functions in the pathway carbohydrate acid metabolism; D-glucarate degradation; 2,5-dioxopentanoate from D-glucarate: step 2/2. This chain is Probable 5-dehydro-4-deoxyglucarate dehydratase 1, found in Streptomyces coelicolor (strain ATCC BAA-471 / A3(2) / M145).